A 61-amino-acid chain; its full sequence is Large ribosomal subunit protein uL30 (61 aa).

This sequence belongs to the universal ribosomal protein uL30 family. In terms of assembly, part of the 50S ribosomal subunit.

This chain is Large ribosomal subunit protein uL30, found in Chlorobaculum tepidum (strain ATCC 49652 / DSM 12025 / NBRC 103806 / TLS) (Chlorobium tepidum).